Here is a 426-residue protein sequence, read N- to C-terminus: Mothers against decapentaplegic homolog 7 (426 aa).

Residues 13 to 55 (LWRSRAPGGEDEEEGAGGGGGGGELRGEGATDSRAHGAGGGGP) are disordered. Basic and acidic residues predominate over residues 37 to 47 (LRGEGATDSRA). An N6-acetyllysine; alternate mark is found at lysine 64 and lysine 70. Residues lysine 64 and lysine 70 each participate in a glycyl lysine isopeptide (Lys-Gly) (interchain with G-Cter in ubiquitin); alternate cross-link. The 144-residue stretch at 64-207 (KAVRGAKGHH…LSRLCELESP (144 aa)) folds into the MH1 domain. The Zn(2+) site is built by cysteine 125, cysteine 180, cysteine 192, and histidine 197. The PY-motif signature appears at 208–211 (PPPY). Residues 208–217 (PPPYSRYPMD) are important for interaction with SMURF2. At serine 249 the chain carries Phosphoserine. In terms of domain architecture, MH2 spans 261–426 (WCVVAYWEEK…CWLEVIFNSR (166 aa)).

This sequence belongs to the dwarfin/SMAD family. In terms of assembly, interacts with WWP1. Interacts with COPS5. Interacts with NEDD4L. Interacts with STAMBP. Interacts with RNF111, AXIN1 and AXIN2. Interacts with PPP1R15A. Interacts (via MH2 domain) with EP300. Interacts with ACVR1B, SMURF1, SMURF2 and TGFBR1; SMAD7 recruits SMURF1 and SMURF2 to the TGF-beta receptor and regulates its degradation. Interacts with PDPK1 (via PH domain). Interacts with TSC22D1/TSC-22; the interaction requires TGF-beta and the interaction is inhibited by TGFBR1. In terms of processing, phosphorylation on Ser-249 does not affect its stability, nuclear localization or inhibitory function in TGFB signaling; however it affects its ability to regulate transcription. Phosphorylated by PDPK1. Post-translationally, ubiquitinated by WWP1. Polyubiquitinated by RNF111, which is enhanced by AXIN1 and promotes proteasomal degradation. In response to TGF-beta, ubiquitinated by SMURF1; which promotes its degradation. Acetylation prevents ubiquitination and degradation mediated by SMURF1. Ubiquitous with higher expression in the lung and vascular endothelium.

Its subcellular location is the nucleus. The protein localises to the cytoplasm. In terms of biological role, antagonist of signaling by TGF-beta (transforming growth factor) type 1 receptor superfamily members; has been shown to inhibit TGF-beta (Transforming growth factor) and activin signaling by associating with their receptors thus preventing SMAD2 access. Functions as an adapter to recruit SMURF2 to the TGF-beta receptor complex. Also acts by recruiting the PPP1R15A-PP1 complex to TGFBR1, which promotes its dephosphorylation. Positively regulates PDPK1 kinase activity by stimulating its dissociation from the 14-3-3 protein YWHAQ which acts as a negative regulator. The sequence is that of Mothers against decapentaplegic homolog 7 (SMAD7) from Homo sapiens (Human).